The primary structure comprises 107 residues: Small ribosomal subunit protein eS25 (107 aa).

The interval 1–35 (MPPKQQLSKAAKAAAAMAGGKKSKKKWSKKSHKDK) is disordered. Low complexity predominate over residues 8 to 20 (SKAAKAAAAMAGG). Positions 21–35 (KKSKKKWSKKSHKDK) are enriched in basic residues.

It belongs to the eukaryotic ribosomal protein eS25 family.

This chain is Small ribosomal subunit protein eS25 (RPS25), found in Candida glabrata (strain ATCC 2001 / BCRC 20586 / JCM 3761 / NBRC 0622 / NRRL Y-65 / CBS 138) (Yeast).